The primary structure comprises 598 residues: Vanadium-dependent bromoperoxidase (598 aa).

Ca(2+) contacts are provided by Phe361, Gln363, Asp365, Asp368, and Gln370. Lys400 and Arg408 together coordinate vanadate. Residue His480 is part of the active site. Residues Ser485, Gly486, His487, Arg547, and His553 each coordinate vanadate. His487 is a catalytic residue.

This sequence belongs to the vanadium-dependent haloperoxidase family. In terms of assembly, homododecamer. Ca(2+) serves as cofactor. It depends on vanadate as a cofactor.

It carries out the reaction RH + Br(-) + H2O2 = RBr + 2 H2O.. Functionally, catalyzes the halogenation of organic substrates in the presence of hydrogen peroxide. The sequence is that of Vanadium-dependent bromoperoxidase from Corallina pilulifera (Red coralline alga).